Consider the following 773-residue polypeptide: Leucine-rich repeat-containing protein let-4 (773 aa).

A signal peptide spans 1–20; it reads MRLLLCLLLFSTLLINSTNA. The Extracellular segment spans residues 21–689; the sequence is CPGVITQACF…RLEKSFFTTT (669 aa). LRR repeat units follow at residues 61 to 84, 85 to 107, 109 to 132, 133 to 157, 159 to 181, 183 to 206, 207 to 230, 231 to 254, 256 to 278, 279 to 302, 303 to 326, 328 to 349, 350 to 373, 375 to 397, 399 to 421, and 486 to 516; these read VGLIQSLTMNQAELVELPPNFFSG, LFIRRLDLSQNKIKKIDDAAFAG, NPVLEEVVLNHNLIEKVPAAALAG, LPNLLRLDLSNNSIVEIQEQEIFPN, NKLYDINLGSNKIFSIHTSTFQN, KNSIQTINLGHNNMTAVPSSAIRG, LKQLQSLHLHKNRIEQLDALNFLN, LPVLNLLNLAGNQIHELNRQAFLN, PSLRYLYLSGNKITKLTAYQFQT, FEQLEMLDLTNNEIGAIPANSLSG, LKQLRQLYLAHNKISNISSNAFTN, SIVVLVLSSNELKTLTAGIISG, LPNLQQVSFRDNQIKTINRNAFYD, ASLVMLDLAKNQLTEIAPTTFLA, LNLLLVDLSENKLPKTPYSAFNS, and LVQIPKMQIHRNVHTTTGDQAPQIPSGAFQQ. The chain crosses the membrane as a helical span at residues 690–710; it reads IIFICVGTAVIVLVVVIAGLC. Residues 711–773 lie on the Cytoplasmic side of the membrane; sequence ISKHRQLQFE…PGSSYCNYYK (63 aa).

In terms of tissue distribution, in L1 larvae, expressed in a subset of epithelial cells including epidermal, vulval and rectal cells and the excretory duct and pore. Absent from internal epithelia such as the gut and pharyngeal tubes. Transiently expressed in the excretory canal cell at the 1.5-fold embryonic stage but no longer visible in this cell at hatching.

Its subcellular location is the apical cell membrane. Required for apical extracellular matrix organization and epithelial junction maintenance. This chain is Leucine-rich repeat-containing protein let-4 (let-4), found in Caenorhabditis elegans.